A 35-amino-acid chain; its full sequence is SSDYLSFKFDKFAPNQLNMYFQGDASVSTKGVLQL.

The protein belongs to the leguminous lectin family. As to quaternary structure, homodimer. Highly glycosylated.

Its function is as follows. Binds lactose or galactose. This is Anti-H(O) lectin 3 from Ulex europaeus (Furze).